The following is a 586-amino-acid chain: CTP synthase (586 aa).

The segment at 1 to 278 (MRKHPQTATK…DAFVVRRLNL (278 aa)) is amidoligase domain. Ser20 serves as a coordination point for CTP. Ser20 provides a ligand contact to UTP. Residues 21-26 (SLGKGL) and Asp78 each bind ATP. Mg(2+)-binding residues include Asp78 and Glu152. Residues 159-161 (DIE), 199-204 (KTKPTQ), and Lys235 contribute to the CTP site. UTP-binding positions include 199–204 (KTKPTQ) and Lys235. The region spanning 303-551 (RIALVGKYVE…VGAAIDYKAG (249 aa)) is the Glutamine amidotransferase type-1 domain. Position 366 (Gly366) interacts with L-glutamine. The active-site Nucleophile; for glutamine hydrolysis is the Cys393. Residues 394 to 397 (LGLQ), Glu416, and Arg477 contribute to the L-glutamine site. Catalysis depends on residues His524 and Glu526. The interval 560-586 (EIPEHTPNGSSHRDGVGQPLPEPASRG) is disordered.

It belongs to the CTP synthase family. As to quaternary structure, homotetramer.

It catalyses the reaction UTP + L-glutamine + ATP + H2O = CTP + L-glutamate + ADP + phosphate + 2 H(+). The catalysed reaction is L-glutamine + H2O = L-glutamate + NH4(+). It carries out the reaction UTP + NH4(+) + ATP = CTP + ADP + phosphate + 2 H(+). The protein operates within pyrimidine metabolism; CTP biosynthesis via de novo pathway; CTP from UDP: step 2/2. Its activity is regulated as follows. Allosterically activated by GTP, when glutamine is the substrate; GTP has no effect on the reaction when ammonia is the substrate. The allosteric effector GTP functions by stabilizing the protein conformation that binds the tetrahedral intermediate(s) formed during glutamine hydrolysis. Inhibited by the product CTP, via allosteric rather than competitive inhibition. Functionally, catalyzes the ATP-dependent amination of UTP to CTP with either L-glutamine or ammonia as the source of nitrogen. Regulates intracellular CTP levels through interactions with the four ribonucleotide triphosphates. The chain is CTP synthase from Mycobacterium tuberculosis (strain CDC 1551 / Oshkosh).